The sequence spans 375 residues: DNA replication and repair protein RecF (375 aa).

An ATP-binding site is contributed by 30 to 37 (GDNAQGKT).

The protein belongs to the RecF family.

It localises to the cytoplasm. Its function is as follows. The RecF protein is involved in DNA metabolism; it is required for DNA replication and normal SOS inducibility. RecF binds preferentially to single-stranded, linear DNA. It also seems to bind ATP. In Symbiobacterium thermophilum (strain DSM 24528 / JCM 14929 / IAM 14863 / T), this protein is DNA replication and repair protein RecF.